The sequence spans 221 residues: Uracil-DNA glycosylase (221 aa).

Aspartate 65 (proton acceptor) is an active-site residue.

This sequence belongs to the uracil-DNA glycosylase (UDG) superfamily. UNG family.

The protein localises to the cytoplasm. The enzyme catalyses Hydrolyzes single-stranded DNA or mismatched double-stranded DNA and polynucleotides, releasing free uracil.. Excises uracil residues from the DNA which can arise as a result of misincorporation of dUMP residues by DNA polymerase or due to deamination of cytosine. In Christiangramia forsetii (strain DSM 17595 / CGMCC 1.15422 / KT0803) (Gramella forsetii), this protein is Uracil-DNA glycosylase.